Reading from the N-terminus, the 212-residue chain is Suppressor of cytokine signaling 1 (212 aa).

The disordered stretch occupies residues 1–55; that stretch reads MVARNQVAADNAISPAAEPRRRSEPSSSSSSSSPAAPVRPRPCPAVPAPAPGDTH. Residues 25 to 36 are compositionally biased toward low complexity; the sequence is PSSSSSSSSPAA. Pro residues predominate over residues 37-50; sequence PVRPRPCPAVPAPA. A kinase inhibitory region (KIR) region spans residues 56–67; the sequence is FRTFRSHSDYRR. The tract at residues 68–79 is extended SH2 subdomain (ESS); the sequence is ITRTSALLDACG. In terms of domain architecture, SH2 spans 80-175; sequence FYWGPLSVHG…PLRQRRVRPL (96 aa). The region spanning 162–211 is the SOCS box domain; the sequence is MLGAPLRQRRVRPLQELCRQRIVAAVGRENLARIPLNPVLRDYLSSFPFQ. An interaction with Elongin BC complex region spans residues 174-183; that stretch reads PLQELCRQRI.

The protein belongs to the SOCS1 family. Interacts with multiple activated proteins of the tyrosine kinase signaling pathway including JAK family kinases, TEC, KIT, GRB2 and VAV. Binding to JAKs is mediated through the KIR and SH2 domain to a phosphorylated tyrosine residue within the JAK JH1 domain. Binds the SH3 domain of GRB2 via diproline determinants in the N-terminus, and the N-terminal regulatory domain of VAV. Interacts with the Elongin BC complex (ELOB and ELOC). Component of an ECS CBC(SOCS1) E3 ubiquitin-protein ligase complex which contains Elongin BC, CUL5, RBX1 and SOCS1. Interacts (via SH2 domain and SOCS box) with TRIM8. Interacts with CUL2. Interacts with AXL and FGFR3. Interacts with INSR. Interacts with TRIM8. Interacts with DCUN1D1. Interacts with IFNGR1. As to expression, high expression in thymus. Lower expression in lung and spleen. Expressed in both Th1 and Th2 cells.

It localises to the nucleus. Its subcellular location is the cytoplasmic vesicle. Its pathway is protein modification; protein ubiquitination. Its function is as follows. Essential negative regulator of type I and type II interferon (IFN) signaling, as well as that of other cytokines, including IL2, IL4, IL6 and leukemia inhibitory factor (LIF). Downregulates cytokine signaling by inhibiting the JAK/STAT signaling pathway. Acts by binding to JAK proteins and to IFNGR1 and inhibiting their kinase activity. In vitro, suppresses Tec protein-tyrosine activity. Regulates IFN-gamma (IFNG)-mediated sensory neuron survival. Probable substrate recognition component of an ECS (Elongin BC-CUL2/5-SOCS-box protein) E3 ubiquitin ligase complex which mediates the ubiquitination and subsequent proteasomal degradation of target proteins. The sequence is that of Suppressor of cytokine signaling 1 from Mus musculus (Mouse).